A 470-amino-acid chain; its full sequence is Putative multidrug resistance protein MdtD (470 aa).

Over 1–11 the chain is Periplasmic; it reads MTELPDNTRWQ. Residues 12 to 32 form a helical membrane-spanning segment; that stretch reads LWIVALGFFMQSLDTTIVNTA. At 33–48 the chain is on the cytoplasmic side; it reads LPSMAKSLGESPLHMH. Residues 49 to 69 traverse the membrane as a helical segment; the sequence is MVVVSYVLTVAVMLPASGWLA. The Periplasmic segment spans residues 70-76; sequence DKIGVRN. Residues 77-97 traverse the membrane as a helical segment; it reads IFFAAIVLFTLGSLFCALSGT. Topologically, residues 98-101 are cytoplasmic; it reads LNQL. The chain crosses the membrane as a helical span at residues 102–124; sequence VLARVLQGVGGAMMVPVGRLTVM. The Periplasmic segment spans residues 125–137; sequence KIVPRAQYMAAMT. Residues 138–158 form a helical membrane-spanning segment; that stretch reads FVTLPGQIGPLLGPALGGVLV. Topologically, residues 159–164 are cytoplasmic; it reads EYASWH. Residues 165–185 traverse the membrane as a helical segment; the sequence is WIFLINIPVGIVGAMATFMLM. Topologically, residues 186–196 are periplasmic; sequence PNYTIETRRFD. Residues 197 to 217 form a helical membrane-spanning segment; the sequence is LPGFLLLAIGMAVLTLALDGS. Residues 218–221 are Cytoplasmic-facing; the sequence is KSMG. The chain crosses the membrane as a helical span at residues 222 to 242; that stretch reads ISPWTLAGLAAGGAAAILLYL. Topologically, residues 243 to 262 are periplasmic; the sequence is LHAKKNSGALFSLRLFCTPT. A helical membrane pass occupies residues 263 to 283; sequence FSLGLLGSFAGRIGSGMLPFM. Topologically, residues 284 to 285 are cytoplasmic; it reads TP. A helical membrane pass occupies residues 286–306; sequence VFLQIGLGFSPFHAGLMMIPM. The Periplasmic portion of the chain corresponds to 307–341; sequence VLGSMGMKRIVVQIVNRFGYRRVLVATTLGLALVS. A helical transmembrane segment spans residues 342-362; sequence LLFMSVALLGWYYLLPLVLLL. Residues 363 to 395 lie on the Cytoplasmic side of the membrane; it reads QGMVNSARFSSMNTLTLKDLPDTLASSGNSLLS. The helical transmembrane segment at 396–416 threads the bilayer; sequence MIMQLSMSIGVTIAGMLLGMF. Over 417-430 the chain is Periplasmic; that stretch reads GQQHIGIDSSATHH. Residues 431 to 451 form a helical membrane-spanning segment; the sequence is VFMYTWLCMAVIIALPAIIFA. Topologically, residues 452 to 470 are cytoplasmic; it reads RVPNDTQQNMVISRRKRSL.

The protein belongs to the major facilitator superfamily. TCR/Tet family.

Its subcellular location is the cell inner membrane. The chain is Putative multidrug resistance protein MdtD from Salmonella paratyphi B (strain ATCC BAA-1250 / SPB7).